A 499-amino-acid chain; its full sequence is ATP synthase subunit alpha (499 aa).

ATP is bound at residue G169 to T176.

The protein belongs to the ATPase alpha/beta chains family. In terms of assembly, F-type ATPases have 2 components, CF(1) - the catalytic core - and CF(0) - the membrane proton channel. CF(1) has five subunits: alpha(3), beta(3), gamma(1), delta(1), epsilon(1). CF(0) has three main subunits: a(1), b(2) and c(9-12). The alpha and beta chains form an alternating ring which encloses part of the gamma chain. CF(1) is attached to CF(0) by a central stalk formed by the gamma and epsilon chains, while a peripheral stalk is formed by the delta and b chains.

It localises to the cell inner membrane. The enzyme catalyses ATP + H2O + 4 H(+)(in) = ADP + phosphate + 5 H(+)(out). In terms of biological role, produces ATP from ADP in the presence of a proton gradient across the membrane. The alpha chain is a regulatory subunit. This Brachyspira hyodysenteriae (strain ATCC 49526 / WA1) protein is ATP synthase subunit alpha.